The chain runs to 464 residues: 3-isopropylmalate dehydratase large subunit (464 aa).

[4Fe-4S] cluster is bound by residues Cys337, Cys397, and Cys400.

Belongs to the aconitase/IPM isomerase family. LeuC type 1 subfamily. As to quaternary structure, heterodimer of LeuC and LeuD. The cofactor is [4Fe-4S] cluster.

The enzyme catalyses (2R,3S)-3-isopropylmalate = (2S)-2-isopropylmalate. Its pathway is amino-acid biosynthesis; L-leucine biosynthesis; L-leucine from 3-methyl-2-oxobutanoate: step 2/4. In terms of biological role, catalyzes the isomerization between 2-isopropylmalate and 3-isopropylmalate, via the formation of 2-isopropylmaleate. The chain is 3-isopropylmalate dehydratase large subunit from Bacillus cereus (strain G9842).